Reading from the N-terminus, the 97-residue chain is Aspartyl/glutamyl-tRNA(Asn/Gln) amidotransferase subunit C (97 aa).

This sequence belongs to the GatC family. As to quaternary structure, heterotrimer of A, B and C subunits.

The enzyme catalyses L-glutamyl-tRNA(Gln) + L-glutamine + ATP + H2O = L-glutaminyl-tRNA(Gln) + L-glutamate + ADP + phosphate + H(+). The catalysed reaction is L-aspartyl-tRNA(Asn) + L-glutamine + ATP + H2O = L-asparaginyl-tRNA(Asn) + L-glutamate + ADP + phosphate + 2 H(+). In terms of biological role, allows the formation of correctly charged Asn-tRNA(Asn) or Gln-tRNA(Gln) through the transamidation of misacylated Asp-tRNA(Asn) or Glu-tRNA(Gln) in organisms which lack either or both of asparaginyl-tRNA or glutaminyl-tRNA synthetases. The reaction takes place in the presence of glutamine and ATP through an activated phospho-Asp-tRNA(Asn) or phospho-Glu-tRNA(Gln). In Prochlorococcus marinus subsp. pastoris (strain CCMP1986 / NIES-2087 / MED4), this protein is Aspartyl/glutamyl-tRNA(Asn/Gln) amidotransferase subunit C.